The chain runs to 288 residues: Bifunctional protein FolD (288 aa).

NADP(+)-binding positions include 171 to 173 (GRS), S196, and T237.

Belongs to the tetrahydrofolate dehydrogenase/cyclohydrolase family. As to quaternary structure, homodimer.

It catalyses the reaction (6R)-5,10-methylene-5,6,7,8-tetrahydrofolate + NADP(+) = (6R)-5,10-methenyltetrahydrofolate + NADPH. It carries out the reaction (6R)-5,10-methenyltetrahydrofolate + H2O = (6R)-10-formyltetrahydrofolate + H(+). The protein operates within one-carbon metabolism; tetrahydrofolate interconversion. Its function is as follows. Catalyzes the oxidation of 5,10-methylenetetrahydrofolate to 5,10-methenyltetrahydrofolate and then the hydrolysis of 5,10-methenyltetrahydrofolate to 10-formyltetrahydrofolate. The polypeptide is Bifunctional protein FolD (Elusimicrobium minutum (strain Pei191)).